Reading from the N-terminus, the 130-residue chain is UPF0102 protein AHA_3896 (130 aa).

Belongs to the UPF0102 family.

This is UPF0102 protein AHA_3896 from Aeromonas hydrophila subsp. hydrophila (strain ATCC 7966 / DSM 30187 / BCRC 13018 / CCUG 14551 / JCM 1027 / KCTC 2358 / NCIMB 9240 / NCTC 8049).